The chain runs to 140 residues: Lysozyme B (140 aa).

Residues 1–18 (MKAFIVLVALALAAPALG) form the signal peptide. In terms of domain architecture, C-type lysozyme spans 19–140 (RTMDRCSLAR…GWLPSIDDCF (122 aa)). 4 disulfides stabilise this stretch: C24–C139, C45–C129, C80–C96, and C92–C110. Residues E50 and D68 contribute to the active site.

Belongs to the glycosyl hydrolase 22 family. Found in the midgut.

The enzyme catalyses Hydrolysis of (1-&gt;4)-beta-linkages between N-acetylmuramic acid and N-acetyl-D-glucosamine residues in a peptidoglycan and between N-acetyl-D-glucosamine residues in chitodextrins.. Functionally, unlikely to play an active role in the humoral immune defense. May have a function in the digestion of bacteria in the food. This chain is Lysozyme B (LysB), found in Drosophila melanogaster (Fruit fly).